Here is a 293-residue protein sequence, read N- to C-terminus: 4-hydroxybenzoate octaprenyltransferase (293 aa).

8 consecutive transmembrane segments (helical) span residues 19–39, 43–63, 95–115, 135–155, 158–178, 209–229, 231–251, and 266–286; these read PIGILLLLWPTLWAQWLASNG, WLILWIFVMGVVLMRSAGCVV, LLAAGLSLLAFLLILPLNALV, FFAIPQAYLGVAFGFGIPMSY, LWGEVPAEAWLLLAANVFWAI, LTAIAFCYAATLALLAWVGAL, DFSGWYYAGLAAAGAIAVYHL, and FLHNTWFGAAVFGGIVLHFLL.

This sequence belongs to the UbiA prenyltransferase family. Requires Mg(2+) as cofactor.

It is found in the cell inner membrane. The enzyme catalyses all-trans-octaprenyl diphosphate + 4-hydroxybenzoate = 4-hydroxy-3-(all-trans-octaprenyl)benzoate + diphosphate. The protein operates within cofactor biosynthesis; ubiquinone biosynthesis. In terms of biological role, catalyzes the prenylation of para-hydroxybenzoate (PHB) with an all-trans polyprenyl group. Mediates the second step in the final reaction sequence of ubiquinone-8 (UQ-8) biosynthesis, which is the condensation of the polyisoprenoid side chain with PHB, generating the first membrane-bound Q intermediate 3-octaprenyl-4-hydroxybenzoate. The protein is 4-hydroxybenzoate octaprenyltransferase of Thiobacillus denitrificans (strain ATCC 25259 / T1).